The following is a 1024-amino-acid chain: Isoleucine--tRNA ligase (1024 aa).

The 'HIGH' region motif lies at 52–62 (PTANGRPHVGH). The short motif at 590 to 594 (KMSKS) is the 'KMSKS' region element. Residue Lys593 participates in ATP binding.

Belongs to the class-I aminoacyl-tRNA synthetase family. IleS type 2 subfamily. As to quaternary structure, monomer. Zn(2+) serves as cofactor.

Its subcellular location is the cytoplasm. The catalysed reaction is tRNA(Ile) + L-isoleucine + ATP = L-isoleucyl-tRNA(Ile) + AMP + diphosphate. In terms of biological role, catalyzes the attachment of isoleucine to tRNA(Ile). As IleRS can inadvertently accommodate and process structurally similar amino acids such as valine, to avoid such errors it has two additional distinct tRNA(Ile)-dependent editing activities. One activity is designated as 'pretransfer' editing and involves the hydrolysis of activated Val-AMP. The other activity is designated 'posttransfer' editing and involves deacylation of mischarged Val-tRNA(Ile). This is Isoleucine--tRNA ligase from Picrophilus torridus (strain ATCC 700027 / DSM 9790 / JCM 10055 / NBRC 100828 / KAW 2/3).